The primary structure comprises 119 residues: Beta-2-microglobulin (119 aa).

The signal sequence occupies residues 1 to 20 (MARFVVAALLVLLSLSGLEA). The region spanning 25–114 (PKIQVYSRHP…MTFPAPKTVK (90 aa)) is the Ig-like C1-type domain. C45 and C100 form a disulfide bridge.

It belongs to the beta-2-microglobulin family. As to quaternary structure, heterodimer of an alpha chain and a beta chain. Beta-2-microglobulin is the beta-chain of major histocompatibility complex class I molecules.

Its subcellular location is the secreted. Functionally, component of the class I major histocompatibility complex (MHC). Involved in the presentation of peptide antigens to the immune system. In Pithecia irrorata (Gray monk saki), this protein is Beta-2-microglobulin (B2M).